A 372-amino-acid chain; its full sequence is Flagellar P-ring protein (372 aa).

A signal peptide spans 1–26 (MNLSSLPFRLLAAAVALCAIAAPASA).

The protein belongs to the FlgI family. As to quaternary structure, the basal body constitutes a major portion of the flagellar organelle and consists of four rings (L,P,S, and M) mounted on a central rod.

It is found in the periplasm. Its subcellular location is the bacterial flagellum basal body. In terms of biological role, assembles around the rod to form the L-ring and probably protects the motor/basal body from shearing forces during rotation. The chain is Flagellar P-ring protein from Xanthomonas axonopodis pv. citri (strain 306).